The primary structure comprises 114 residues: UPF0342 protein SERP1381 (114 aa).

Belongs to the UPF0342 family.

The chain is UPF0342 protein SERP1381 from Staphylococcus epidermidis (strain ATCC 35984 / DSM 28319 / BCRC 17069 / CCUG 31568 / BM 3577 / RP62A).